Consider the following 311-residue polypeptide: Purine nucleoside phosphorylase (311 aa).

Residue S2 is modified to N-acetylserine. Residues S46, H81, 101 to 103 (RLH), and A134 contribute to the phosphate site. Residue E219 coordinates a purine D-ribonucleoside. A phosphate-binding site is contributed by S238. N261 serves as a coordination point for a purine D-ribonucleoside. S275 carries the phosphoserine modification.

The protein belongs to the PNP/MTAP phosphorylase family.

It carries out the reaction a purine D-ribonucleoside + phosphate = a purine nucleobase + alpha-D-ribose 1-phosphate. It participates in purine metabolism; purine nucleoside salvage. Functionally, the purine nucleoside phosphorylases catalyze the phosphorolytic breakdown of the N-glycosidic bond in the beta-(deoxy)ribonucleoside molecules, with the formation of the corresponding free purine bases and pentose-1-phosphate. Cleaves guanosine and inosine. This is Purine nucleoside phosphorylase (PNP1) from Saccharomyces cerevisiae (strain ATCC 204508 / S288c) (Baker's yeast).